A 436-amino-acid chain; its full sequence is MHLLVYLSLFFALALASVTEISLDNKHRHRHEQQGHHDSAKHGHQKDKQQQEQIKNDEGKLTKEEKILSEENSDFSVNLFNQLSTESKRSPRKNIFFSPISISAAFYMLALGAKSETHQQILKGLSFNKKKLSESQVHEAFKRLIEDSNNPMKAHQFTIGNALFVEQTVNILKGFEENVKHYYQAGVFPMNFKDPDNAKKQLNNYVKDKTHGVIQEMIRELDSNTEMVLVNYVLYKGEWANNFNPTLTQKSLFSVDKNTNVTVQMMNRLGLYRTYQDDDCKIIELPYKNDTAMLLVVPQLGKIQELVLTSKLINHWYESLATSIVDLYMPTFSISGKVVLKDTLRKMGISDIFTDKADLTGISEQIKLKVSMASHNAVLNVNEFGTEAVGATSAQASPTKLFPPFLIDSPFLVMIYSRTLGSQLFMGKVMDPTNAQ.

The signal sequence occupies residues 1 to 16 (MHLLVYLSLFFALALA). The interval 26–60 (KHRHRHEQQGHHDSAKHGHQKDKQQQEQIKNDEGK) is disordered. A compositionally biased stretch (basic and acidic residues) spans 32-60 (EQQGHHDSAKHGHQKDKQQQEQIKNDEGK). Asn260 and Asn289 each carry an N-linked (GlcNAc...) asparagine glycan.

It belongs to the serpin family. As to expression, liver.

It localises to the secreted. Its subcellular location is the extracellular space. Its function is as follows. Not yet known. The sequence is that of Serine protease inhibitor A6 (serpina6) from Xenopus laevis (African clawed frog).